We begin with the raw amino-acid sequence, 547 residues long: Glucose-6-phosphate isomerase (547 aa).

Residue Glu353 is the Proton donor of the active site. Active-site residues include His384 and Lys512.

This sequence belongs to the GPI family.

It is found in the cytoplasm. It catalyses the reaction alpha-D-glucose 6-phosphate = beta-D-fructose 6-phosphate. It participates in carbohydrate biosynthesis; gluconeogenesis. Its pathway is carbohydrate degradation; glycolysis; D-glyceraldehyde 3-phosphate and glycerone phosphate from D-glucose: step 2/4. Functionally, catalyzes the reversible isomerization of glucose-6-phosphate to fructose-6-phosphate. The chain is Glucose-6-phosphate isomerase from Pseudoalteromonas atlantica (strain T6c / ATCC BAA-1087).